Here is a 231-residue protein sequence, read N- to C-terminus: 5'-methylthioadenosine/S-adenosylhomocysteine nucleosidase (231 aa).

Glu-12 serves as the catalytic Proton acceptor. Substrate-binding positions include Gly-78, Met-153, and 174–175; that span reads ME. Asp-198 (proton donor) is an active-site residue.

Belongs to the PNP/UDP phosphorylase family. MtnN subfamily.

It catalyses the reaction S-adenosyl-L-homocysteine + H2O = S-(5-deoxy-D-ribos-5-yl)-L-homocysteine + adenine. The enzyme catalyses S-methyl-5'-thioadenosine + H2O = 5-(methylsulfanyl)-D-ribose + adenine. It carries out the reaction 5'-deoxyadenosine + H2O = 5-deoxy-D-ribose + adenine. It participates in amino-acid biosynthesis; L-methionine biosynthesis via salvage pathway; S-methyl-5-thio-alpha-D-ribose 1-phosphate from S-methyl-5'-thioadenosine (hydrolase route): step 1/2. Its function is as follows. Catalyzes the irreversible cleavage of the glycosidic bond in both 5'-methylthioadenosine (MTA) and S-adenosylhomocysteine (SAH/AdoHcy) to adenine and the corresponding thioribose, 5'-methylthioribose and S-ribosylhomocysteine, respectively. Also cleaves 5'-deoxyadenosine, a toxic by-product of radical S-adenosylmethionine (SAM) enzymes, into 5-deoxyribose and adenine. This is 5'-methylthioadenosine/S-adenosylhomocysteine nucleosidase from Bacillus subtilis (strain 168).